The following is a 105-amino-acid chain: Small ribosomal subunit protein uS10 (105 aa).

The protein belongs to the universal ribosomal protein uS10 family. In terms of assembly, part of the 30S ribosomal subunit.

Its function is as follows. Involved in the binding of tRNA to the ribosomes. The sequence is that of Small ribosomal subunit protein uS10 from Rickettsia massiliae (strain Mtu5).